A 494-amino-acid polypeptide reads, in one-letter code: Costunolide synthase (494 aa).

The chain crosses the membrane as a helical span at residues 3–23 (PLTIVSLVVASLFLFAFWALS). Cys-432 is a heme binding site.

It belongs to the cytochrome P450 family. Requires heme as cofactor.

The protein localises to the membrane. The catalysed reaction is germacra-1(10),4,11(13)-trien-12-oate + reduced [NADPH--hemoprotein reductase] + O2 = (+)-costunolide + oxidized [NADPH--hemoprotein reductase] + 2 H2O. In terms of biological role, hydroxylates germacrene A acid to 6-alpha-hydroxy-germacrne A acid, a precursor of sesquiterpene lactones that spontaneously undergoes a lactonization which yields costunolide. Costunolide can then spontaneously conjugate to glutathione or cysteine. This chain is Costunolide synthase (CYP71BL3), found in Cichorium intybus (Chicory).